Consider the following 650-residue polypeptide: DNA gyrase subunit B (650 aa).

The Toprim domain occupies 429–543 (NELFIVEGDS…AGYVYIAQPP (115 aa)). Mg(2+)-binding residues include E435, D508, and D510.

It belongs to the type II topoisomerase GyrB family. In terms of assembly, heterotetramer, composed of two GyrA and two GyrB chains. In the heterotetramer, GyrA contains the active site tyrosine that forms a transient covalent intermediate with DNA, while GyrB binds cofactors and catalyzes ATP hydrolysis. The cofactor is Mg(2+). Requires Mn(2+) as cofactor. It depends on Ca(2+) as a cofactor.

It localises to the cytoplasm. It catalyses the reaction ATP-dependent breakage, passage and rejoining of double-stranded DNA.. Its function is as follows. A type II topoisomerase that negatively supercoils closed circular double-stranded (ds) DNA in an ATP-dependent manner to modulate DNA topology and maintain chromosomes in an underwound state. Negative supercoiling favors strand separation, and DNA replication, transcription, recombination and repair, all of which involve strand separation. Also able to catalyze the interconversion of other topological isomers of dsDNA rings, including catenanes and knotted rings. Type II topoisomerases break and join 2 DNA strands simultaneously in an ATP-dependent manner. This is DNA gyrase subunit B from Streptococcus pyogenes serotype M3 (strain ATCC BAA-595 / MGAS315).